A 71-amino-acid chain; its full sequence is Large ribosomal subunit protein uL29 (71 aa).

It belongs to the universal ribosomal protein uL29 family.

In Rickettsia canadensis (strain McKiel), this protein is Large ribosomal subunit protein uL29.